The sequence spans 474 residues: tRNA-2-methylthio-N(6)-dimethylallyladenosine synthase (474 aa).

Positions 3–120 (KKLHIKTWGC…LPEMIEQIQQ (118 aa)) constitute an MTTase N-terminal domain. The [4Fe-4S] cluster site is built by cysteine 12, cysteine 49, cysteine 83, cysteine 157, cysteine 161, and cysteine 164. Positions 143–375 (RAEGPSAFVS…QDRITQQAMR (233 aa)) constitute a Radical SAM core domain. Residues 378-441 (RQMLGTVQRI…TNSLRGKFIR (64 aa)) enclose the TRAM domain.

It belongs to the methylthiotransferase family. MiaB subfamily. In terms of assembly, monomer. The cofactor is [4Fe-4S] cluster.

The protein resides in the cytoplasm. The enzyme catalyses N(6)-dimethylallyladenosine(37) in tRNA + (sulfur carrier)-SH + AH2 + 2 S-adenosyl-L-methionine = 2-methylsulfanyl-N(6)-dimethylallyladenosine(37) in tRNA + (sulfur carrier)-H + 5'-deoxyadenosine + L-methionine + A + S-adenosyl-L-homocysteine + 2 H(+). Catalyzes the methylthiolation of N6-(dimethylallyl)adenosine (i(6)A), leading to the formation of 2-methylthio-N6-(dimethylallyl)adenosine (ms(2)i(6)A) at position 37 in tRNAs that read codons beginning with uridine. The polypeptide is tRNA-2-methylthio-N(6)-dimethylallyladenosine synthase (Shewanella loihica (strain ATCC BAA-1088 / PV-4)).